The chain runs to 264 residues: Acyl-[acyl-carrier-protein]--UDP-N-acetylglucosamine O-acyltransferase (264 aa).

Belongs to the transferase hexapeptide repeat family. LpxA subfamily. In terms of assembly, homotrimer.

Its subcellular location is the cytoplasm. The catalysed reaction is a (3R)-hydroxyacyl-[ACP] + UDP-N-acetyl-alpha-D-glucosamine = a UDP-3-O-[(3R)-3-hydroxyacyl]-N-acetyl-alpha-D-glucosamine + holo-[ACP]. Its pathway is glycolipid biosynthesis; lipid IV(A) biosynthesis; lipid IV(A) from (3R)-3-hydroxytetradecanoyl-[acyl-carrier-protein] and UDP-N-acetyl-alpha-D-glucosamine: step 1/6. Its function is as follows. Involved in the biosynthesis of lipid A, a phosphorylated glycolipid that anchors the lipopolysaccharide to the outer membrane of the cell. The sequence is that of Acyl-[acyl-carrier-protein]--UDP-N-acetylglucosamine O-acyltransferase from Leptothrix cholodnii (strain ATCC 51168 / LMG 8142 / SP-6) (Leptothrix discophora (strain SP-6)).